A 688-amino-acid chain; its full sequence is Potassium-transporting ATPase ATP-binding subunit (688 aa).

4 consecutive transmembrane segments (helical) span residues 35–55, 62–82, 219–239, and 260–280; these read VMMV…VQFA, AVFS…ANLA, IALS…VVTL, and VLVA…LSAI. Residue Asp-313 is the 4-aspartylphosphate intermediate of the active site. Residues Asp-350, Glu-354, 383–390, and Lys-401 contribute to the ATP site; that span reads FSAQTRMS. Residues Asp-524 and Asp-528 each contribute to the Mg(2+) site. 3 helical membrane passes run 594-614, 622-642, and 668-688; these read FAIL…LNLM, AILS…PLAL, and VVLP…MGWI.

The protein belongs to the cation transport ATPase (P-type) (TC 3.A.3) family. Type IA subfamily. The system is composed of three essential subunits: KdpA, KdpB and KdpC.

It localises to the cell inner membrane. It carries out the reaction K(+)(out) + ATP + H2O = K(+)(in) + ADP + phosphate + H(+). Its function is as follows. Part of the high-affinity ATP-driven potassium transport (or Kdp) system, which catalyzes the hydrolysis of ATP coupled with the electrogenic transport of potassium into the cytoplasm. This subunit is responsible for energy coupling to the transport system and for the release of the potassium ions to the cytoplasm. The chain is Potassium-transporting ATPase ATP-binding subunit from Tolumonas auensis (strain DSM 9187 / NBRC 110442 / TA 4).